A 498-amino-acid chain; its full sequence is Galactose-1-phosphate uridylyltransferase (498 aa).

This sequence belongs to the galactose-1-phosphate uridylyltransferase type 2 family.

The protein localises to the cytoplasm. It catalyses the reaction alpha-D-galactose 1-phosphate + UDP-alpha-D-glucose = alpha-D-glucose 1-phosphate + UDP-alpha-D-galactose. The protein operates within carbohydrate metabolism; galactose metabolism. This Clostridium perfringens (strain 13 / Type A) protein is Galactose-1-phosphate uridylyltransferase.